The chain runs to 498 residues: Glycerol kinase (498 aa).

T12 contributes to the ADP binding site. ATP is bound by residues T12, T13, and S14. T12 lines the sn-glycerol 3-phosphate pocket. R16 is a binding site for ADP. 3 residues coordinate sn-glycerol 3-phosphate: R82, E83, and Y134. Positions 82, 83, and 134 each coordinate glycerol. Position 230 is a phosphohistidine; by HPr (H230). D244 serves as a coordination point for sn-glycerol 3-phosphate. 2 residues coordinate glycerol: D244 and Q245. Residues T266 and G309 each contribute to the ADP site. ATP is bound by residues T266, G309, Q313, and G410. G410 and N414 together coordinate ADP.

This sequence belongs to the FGGY kinase family. As to quaternary structure, homotetramer and homodimer (in equilibrium). Post-translationally, the phosphoenolpyruvate-dependent sugar phosphotransferase system (PTS), including enzyme I, and histidine-containing protein (HPr) are required for the phosphorylation, which leads to the activation of the enzyme.

The enzyme catalyses glycerol + ATP = sn-glycerol 3-phosphate + ADP + H(+). It participates in polyol metabolism; glycerol degradation via glycerol kinase pathway; sn-glycerol 3-phosphate from glycerol: step 1/1. Its activity is regulated as follows. Activated by phosphorylation and inhibited by fructose 1,6-bisphosphate (FBP). Key enzyme in the regulation of glycerol uptake and metabolism. Catalyzes the phosphorylation of glycerol to yield sn-glycerol 3-phosphate. This Staphylococcus aureus (strain bovine RF122 / ET3-1) protein is Glycerol kinase.